The following is a 201-amino-acid chain: MIGRLHGKIIEKQPPEMVIDVQGVGYEVLLPMTSFYSLPQVGEEATIFTHLVVREDAHLLFGFAQKQDRTLFRELIKTNGVGPKLALAILSAMSVSQFANAVENEELAKLTKIPGIGRKTAERLLVELKGKFKGVAQSDFFEEHSVETIVATHSHDPADEARDALVALGYKLADAEKMIKKVNKAGATSEQLIREALKASL.

A domain I region spans residues 1 to 64 (MIGRLHGKII…EDAHLLFGFA (64 aa)). The tract at residues 65-143 (QKQDRTLFRE…GVAQSDFFEE (79 aa)) is domain II. The tract at residues 144-154 (HSVETIVATHS) is flexible linker. The tract at residues 154–201 (SHDPADEARDALVALGYKLADAEKMIKKVNKAGATSEQLIREALKASL) is domain III.

This sequence belongs to the RuvA family. In terms of assembly, homotetramer. Forms an RuvA(8)-RuvB(12)-Holliday junction (HJ) complex. HJ DNA is sandwiched between 2 RuvA tetramers; dsDNA enters through RuvA and exits via RuvB. An RuvB hexamer assembles on each DNA strand where it exits the tetramer. Each RuvB hexamer is contacted by two RuvA subunits (via domain III) on 2 adjacent RuvB subunits; this complex drives branch migration. In the full resolvosome a probable DNA-RuvA(4)-RuvB(12)-RuvC(2) complex forms which resolves the HJ.

The protein localises to the cytoplasm. Its function is as follows. The RuvA-RuvB-RuvC complex processes Holliday junction (HJ) DNA during genetic recombination and DNA repair, while the RuvA-RuvB complex plays an important role in the rescue of blocked DNA replication forks via replication fork reversal (RFR). RuvA specifically binds to HJ cruciform DNA, conferring on it an open structure. The RuvB hexamer acts as an ATP-dependent pump, pulling dsDNA into and through the RuvAB complex. HJ branch migration allows RuvC to scan DNA until it finds its consensus sequence, where it cleaves and resolves the cruciform DNA. This Actinobacillus pleuropneumoniae serotype 5b (strain L20) protein is Holliday junction branch migration complex subunit RuvA.